The sequence spans 873 residues: Coatomer subunit gamma-2 (873 aa).

Basic and acidic residues predominate over residues 1-11 (MIKKFDKKDEE). The tract at residues 1–21 (MIKKFDKKDEESGSGSNPFQH) is disordered. 6 HEAT repeats span residues 64–101 (TEATEAFFAMTRLFQSNDQTLRRMCYLTIKEMANISED), 283–320 (RELAPAVSVLQLFCSSPKAALRYAAVRTLNKVAMKHPS), 321–355 (AVTACNLDLENLITDSNRSIATLAITTLLKTGSES), 356–392 (SVDRLMKQISSFVSEISDEFKVVVVQAISALCQKYPR), 395–430 (SVMMNFLSNMLRDDGGFEYKRAIVDCIISIIEENPE), and 467–504 (PTPSKYIRFIFNRVVLESEAVRAAAVSALAKFGAQNDD).

The protein belongs to the COPG family. As to quaternary structure, oligomeric complex.

It is found in the cytoplasm. Its subcellular location is the golgi apparatus membrane. It localises to the cytoplasmic vesicle. The protein localises to the COPI-coated vesicle membrane. Its function is as follows. The coatomer is a cytosolic protein complex that binds to dilysine motifs and reversibly associates with Golgi non-clathrin-coated vesicles, which further mediate biosynthetic protein transport from the ER, via the Golgi up to the trans Golgi network. Coatomer complex is required for budding from Golgi membranes, and is essential for the retrograde Golgi-to-ER transport of dilysine-tagged proteins. The chain is Coatomer subunit gamma-2 (copg2) from Danio rerio (Zebrafish).